The chain runs to 1365 residues: Histone-lysine N-methyltransferase NSD2 (1365 aa).

Residues T110 and T114 each carry the phosphothreonine modification. The residue at position 121 (S121) is a Phosphoserine. Residues 149–170 are disordered; the sequence is ADVSQSEENGQKPENKARRNRK. Residue S172 is modified to Phosphoserine. The 65-residue stretch at 222 to 286 folds into the PWWP 1 domain; sequence VGDLVWSKVS…FEKSLVAFEG (65 aa). S376 carries the phosphoserine modification. Disordered regions lie at residues 376 to 455 and 516 to 658; these read SSGV…RKGD and EDSG…SKKS. The residue at position 422 (T422) is a Phosphothreonine. Positions 453–521 form a DNA-binding region, HMG box; that stretch reads KGDAASQFLV…VQAEEDSGNV (69 aa). The residue at position 544 (T544) is a Phosphothreonine. Residues 552 to 567 show a composition bias toward basic and acidic residues; it reads DKHSLRKRDTITDKTA. Over residues 580-590 the composition is skewed to polar residues; that stretch reads SLKSQAATKNL. The span at 606 to 622 shows a compositional bias: low complexity; it reads AASSALGFSKSSSPSAS. A Phosphoserine modification is found at S614. Residues 632-648 show a composition bias toward acidic residues; sequence PGDEPSESPYESADETQ. 3 PHD-type zinc fingers span residues 667–713, 714–770, and 831–875; these read EYVC…CASG, IHSC…CHAS, and VSWC…CRAG. The PWWP 2 domain maps to 880–942; the sequence is FQDIIWVKLG…QARVFPYMEG (63 aa). Positions 1011–1061 constitute an AWS domain; sequence SEIPKCNCKPTDENPCGFDSECLNRMLMFECHPQVCPAGEFCQNQCFTKRQ. C1016, C1018, C1026, C1032, C1041, C1046, and C1052 together coordinate Zn(2+). In terms of domain architecture, SET spans 1063-1180; sequence PETKIIKTDG…AGTELTFNYN (118 aa). Residues W1075, 1115 to 1118, and 1141 to 1142 contribute to the S-adenosyl-L-methionine site; these read THFY and NH. Zn(2+) is bound at residue C1144. N1186 lines the S-adenosyl-L-methionine pocket. The Post-SET domain maps to 1187-1203; it reads EKTVCRCGASNCSGFLG. Zn(2+) is bound at residue C1191. R1192 provides a ligand contact to S-adenosyl-L-methionine. Zn(2+)-binding residues include C1193 and C1198. A disordered region spans residues 1207-1232; the sequence is KTSTTLSSEEKGKKTKKKTRRRRAKG. Residues 1219–1230 show a composition bias toward basic residues; the sequence is KKTKKKTRRRRA. The segment at 1239–1286 adopts a PHD-type 4; atypical zinc-finger fold; sequence EDECFRCGDGGQLVLCDRKFCTKAYHLSCLGLGKRPFGKWECPWHHCD. The segment at 1333-1365 is disordered; sequence VRSTKTEKPPPEPGKPKGKRRRRRGWRRVTEGK. Residues 1348–1359 are compositionally biased toward basic residues; that stretch reads PKGKRRRRRGWR.

Belongs to the class V-like SAM-binding methyltransferase superfamily. Histone-lysine methyltransferase family. SET2 subfamily. In terms of assembly, interacts with HDAC1. Interacts (via PHD-type zinc fingers 1, 2 and 3) with SALL1. Interacts (via PHD-type 1, 2 and 3) with SALL4. Interacts with NANOG. Interacts with OGT. Interacts (via HMG box) with NKX2-5. Widely expressed. Predominantly expressed in thymus and testis.

The protein localises to the nucleus. It is found in the chromosome. It localises to the cytoplasm. Its subcellular location is the nucleolus. It carries out the reaction L-lysyl(36)-[histone H3] + S-adenosyl-L-methionine = N(6)-methyl-L-lysyl(36)-[histone H3] + S-adenosyl-L-homocysteine + H(+). The enzyme catalyses L-lysyl(36)-[histone H3] + 2 S-adenosyl-L-methionine = N(6),N(6)-dimethyl-L-lysyl(36)-[histone H3] + 2 S-adenosyl-L-homocysteine + 2 H(+). Its function is as follows. Histone methyltransferase which specifically dimethylates nucleosomal histone H3 at 'Lys-36' (H3K36me2). Also monomethylates nucleosomal histone H3 at 'Lys-36' (H3K36me) in vitro. Does not trimethylate nucleosomal histone H3 at 'Lys-36' (H3K36me3). However, specifically trimethylates histone H3 at 'Lys-36' (H3K36me3) at euchromatic regions in embryonic stem (ES) cells. By methylating histone H3 at 'Lys-36', involved in the regulation of gene transcription during various biological processes. In ES cells, associates with developmental transcription factors such as SALL1 and represses inappropriate gene transcription mediated by histone deacetylation. During heart development, associates with transcription factor NKX2-5 to repress transcription of NKX2-5 target genes. Plays an essential role in adipogenesis, by regulating expression of genes involved in pre-adipocyte differentiation. During T-cell receptor (TCR) and CD28-mediated T-cell activation, promotes the transcription of transcription factor BCL6 which is required for follicular helper T (Tfh) cell differentiation. During B-cell development, required for the generation of the B1 lineage. During B2 cell activation, may contribute to the control of isotype class switch recombination (CRS), splenic germinal center formation, and the humoral immune response. Plays a role in class switch recombination of the immunoglobulin heavy chain (IgH) locus during B-cell activation. By regulating the methylation of histone H3 at 'Lys-36' and histone H4 at 'Lys-20' at the IgH locus, involved in TP53BP1 recruitment to the IgH switch region and promotes the transcription of IgA. Functionally, histone methyltransferase which specifically dimethylates nucleosomal histone H3 at 'Lys-36' (H3K36me2). Histone methyltransferase which specifically dimethylates nucleosomal histone H3 at 'Lys-36' (H3K36me2). Methylation of histone H3 at 'Lys-27' is controversial. Mono-, di- or tri-methylates histone H3 at 'Lys-27' (H3K27me, H3K27me2 and H3K27me3). Does not methylate histone H3 at 'Lys-27'. May act as a transcription regulator that binds DNA and suppresses IL5 transcription through HDAC recruitment. This chain is Histone-lysine N-methyltransferase NSD2, found in Homo sapiens (Human).